A 132-amino-acid polypeptide reads, in one-letter code: Cytochrome c' (132 aa).

Heme c contacts are provided by Arg10, Gln11, Asp65, Cys122, Cys125, and His126.

In terms of processing, binds 1 heme c group covalently per subunit.

Cytochrome c' is the most widely occurring bacterial c-type cytochrome. Cytochromes c' are high-spin proteins and the heme has no sixth ligand. Their exact function is not known. The chain is Cytochrome c' from Halomonas halodenitrificans (strain ATCC 12084 / NCIMB 8669) (Paracoccus halodenitrificans).